The chain runs to 215 residues: Flavin-dependent thymidylate synthase (215 aa).

The ThyX domain maps to 1–215 (MDVRFISLTK…FPTVAAALEW (215 aa)). FAD contacts are provided by residues Ser56, 79–81 (RHR), and Glu87. Residues 76–79 (QILR), 87–91 (EFSLR), and Arg155 contribute to the dUMP site. The short motif at 79 to 89 (RHRSFSFQEFS) is the ThyX motif element. His177 is a binding site for FAD. Residue Arg182 participates in dUMP binding. Arg182 serves as the catalytic Involved in ionization of N3 of dUMP, leading to its activation.

This sequence belongs to the thymidylate synthase ThyX family. In terms of assembly, homotetramer. Requires FAD as cofactor.

The enzyme catalyses dUMP + (6R)-5,10-methylene-5,6,7,8-tetrahydrofolate + NADPH + H(+) = dTMP + (6S)-5,6,7,8-tetrahydrofolate + NADP(+). It participates in pyrimidine metabolism; dTTP biosynthesis. Catalyzes the reductive methylation of 2'-deoxyuridine-5'-monophosphate (dUMP) to 2'-deoxythymidine-5'-monophosphate (dTMP) while utilizing 5,10-methylenetetrahydrofolate (mTHF) as the methyl donor, and NADPH and FADH(2) as the reductant. This chain is Flavin-dependent thymidylate synthase, found in Synechocystis sp. (strain ATCC 27184 / PCC 6803 / Kazusa).